A 437-amino-acid polypeptide reads, in one-letter code: 3-deoxy-D-manno-octulosonic acid transferase (437 aa).

The helical; Signal-anchor transmembrane segment at 16–36 (VVLVCAFVIALPKLLYKMLVY) threads the bilayer. Glu-70 acts as the Proton acceptor in catalysis. CMP-binding positions include 279 to 280 (PR), 319 to 321 (IGL), and 346 to 349 (NLLE).

It belongs to the glycosyltransferase group 1 family. Glycosyltransferase 30 subfamily.

Its subcellular location is the cell inner membrane. It carries out the reaction lipid IVA (E. coli) + CMP-3-deoxy-beta-D-manno-octulosonate = alpha-Kdo-(2-&gt;6)-lipid IVA (E. coli) + CMP + H(+). The catalysed reaction is alpha-Kdo-(2-&gt;6)-lipid IVA (E. coli) + CMP-3-deoxy-beta-D-manno-octulosonate = alpha-Kdo-(2-&gt;4)-alpha-Kdo-(2-&gt;6)-lipid IVA (E. coli) + CMP + H(+). It catalyses the reaction alpha-Kdo-(2-&gt;4)-alpha-Kdo-(2-&gt;6)-lipid IVA (E. coli) + CMP-3-deoxy-beta-D-manno-octulosonate = alpha-Kdo-(2-&gt;8)-alpha-Kdo-(2-&gt;4)-alpha-Kdo-(2-&gt;6)-lipid IVA (E. coli) + CMP + H(+). Its pathway is bacterial outer membrane biogenesis; LPS core biosynthesis. Involved in lipopolysaccharide (LPS) biosynthesis. Catalyzes the transfer of three 3-deoxy-D-manno-octulosonate (Kdo) residues from CMP-Kdo to lipid IV(A), the tetraacyldisaccharide-1,4'-bisphosphate precursor of lipid A. Thus generates the genus-specific LPS epitope of Chlamydia, composed of the trisaccharide alpha-Kdo-(2-&gt;8)-alpha-Kdo-(2-&gt;4)-alpha-Kdo. This chain is 3-deoxy-D-manno-octulosonic acid transferase (waaA), found in Chlamydia pneumoniae (Chlamydophila pneumoniae).